A 391-amino-acid polypeptide reads, in one-letter code: Na(+)/H(+) antiporter NhaA 1 (391 aa).

Helical transmembrane passes span 19 to 39 (FLAS…AALI), 56 to 76 (VWLG…IFFL), 98 to 118 (ALPG…YIAI), 128 to 148 (GWAI…SLLG), 157 to 177 (VFLA…IAFF), 180 to 200 (SGLN…LIAL), 208 to 228 (LLPY…SGVH), 264 to 284 (VAFA…LSGI), 297 to 317 (VALG…VLAI), 335 to 355 (GVAI…NLAF), and 364 to 384 (EVKV…ILLL).

This sequence belongs to the NhaA Na(+)/H(+) (TC 2.A.33) antiporter family.

The protein localises to the cell inner membrane. The enzyme catalyses Na(+)(in) + 2 H(+)(out) = Na(+)(out) + 2 H(+)(in). In terms of biological role, na(+)/H(+) antiporter that extrudes sodium in exchange for external protons. In Pseudomonas savastanoi pv. phaseolicola (strain 1448A / Race 6) (Pseudomonas syringae pv. phaseolicola (strain 1448A / Race 6)), this protein is Na(+)/H(+) antiporter NhaA 1.